A 293-amino-acid polypeptide reads, in one-letter code: Ribonuclease Z (293 aa).

Residues His60, His62, Asp64, His65, His132, Asp200, and His256 each coordinate Zn(2+). Catalysis depends on Asp64, which acts as the Proton acceptor.

Belongs to the RNase Z family. In terms of assembly, homodimer. The cofactor is Zn(2+).

It catalyses the reaction Endonucleolytic cleavage of RNA, removing extra 3' nucleotides from tRNA precursor, generating 3' termini of tRNAs. A 3'-hydroxy group is left at the tRNA terminus and a 5'-phosphoryl group is left at the trailer molecule.. Functionally, zinc phosphodiesterase, which displays some tRNA 3'-processing endonuclease activity. Probably involved in tRNA maturation, by removing a 3'-trailer from precursor tRNA. This Sulfurisphaera tokodaii (strain DSM 16993 / JCM 10545 / NBRC 100140 / 7) (Sulfolobus tokodaii) protein is Ribonuclease Z.